Here is a 207-residue protein sequence, read N- to C-terminus: NADH-quinone oxidoreductase subunit A (207 aa).

The next 3 helical transmembrane spans lie at 6 to 26, 62 to 82, and 87 to 107; these read WSAI…LVVP, LVAI…AYAV, and AGWL…IGLV.

It belongs to the complex I subunit 3 family. In terms of assembly, NDH-1 is composed of 14 different subunits. Subunits NuoA, H, J, K, L, M, N constitute the membrane sector of the complex.

The protein localises to the cell inner membrane. It carries out the reaction a quinone + NADH + 5 H(+)(in) = a quinol + NAD(+) + 4 H(+)(out). Functionally, NDH-1 shuttles electrons from NADH, via FMN and iron-sulfur (Fe-S) centers, to quinones in the respiratory chain. The immediate electron acceptor for the enzyme in this species is believed to be ubiquinone. Couples the redox reaction to proton translocation (for every two electrons transferred, four hydrogen ions are translocated across the cytoplasmic membrane), and thus conserves the redox energy in a proton gradient. The polypeptide is NADH-quinone oxidoreductase subunit A (Psychrobacter arcticus (strain DSM 17307 / VKM B-2377 / 273-4)).